A 201-amino-acid chain; its full sequence is Small ribosomal subunit protein uS4 (201 aa).

Residues 21-43 (GTGKELNRRPYAPGDHGQGRRQK) form a disordered region. In terms of domain architecture, S4 RNA-binding spans 93-153 (RRLDNMVYRL…EKSKDMAIIK (61 aa)).

Belongs to the universal ribosomal protein uS4 family. In terms of assembly, part of the 30S ribosomal subunit. Contacts protein S5. The interaction surface between S4 and S5 is involved in control of translational fidelity.

In terms of biological role, one of the primary rRNA binding proteins, it binds directly to 16S rRNA where it nucleates assembly of the body of the 30S subunit. Functionally, with S5 and S12 plays an important role in translational accuracy. The protein is Small ribosomal subunit protein uS4 of Levilactobacillus brevis (strain ATCC 367 / BCRC 12310 / CIP 105137 / JCM 1170 / LMG 11437 / NCIMB 947 / NCTC 947) (Lactobacillus brevis).